Here is a 175-residue protein sequence, read N- to C-terminus: Sec-independent protein translocase protein TatB (175 aa).

Residues Met1 to Gly21 form a helical membrane-spanning segment. 2 disordered regions span residues Gly104–Trp132 and Ser155–Phe175.

It belongs to the TatB family. The Tat system comprises two distinct complexes: a TatABC complex, containing multiple copies of TatA, TatB and TatC subunits, and a separate TatA complex, containing only TatA subunits. Substrates initially bind to the TatABC complex, which probably triggers association of the separate TatA complex to form the active translocon.

The protein resides in the cell inner membrane. In terms of biological role, part of the twin-arginine translocation (Tat) system that transports large folded proteins containing a characteristic twin-arginine motif in their signal peptide across membranes. Together with TatC, TatB is part of a receptor directly interacting with Tat signal peptides. TatB may form an oligomeric binding site that transiently accommodates folded Tat precursor proteins before their translocation. The polypeptide is Sec-independent protein translocase protein TatB (Paraburkholderia xenovorans (strain LB400)).